The following is a 186-amino-acid chain: Ribosome-recycling factor (186 aa).

It belongs to the RRF family.

The protein resides in the cytoplasm. In terms of biological role, responsible for the release of ribosomes from messenger RNA at the termination of protein biosynthesis. May increase the efficiency of translation by recycling ribosomes from one round of translation to another. This is Ribosome-recycling factor from Methylocella silvestris (strain DSM 15510 / CIP 108128 / LMG 27833 / NCIMB 13906 / BL2).